A 162-amino-acid chain; its full sequence is NRR repressor homolog 3 (162 aa).

The tract at residues 1 to 80 (MDPTMPTPHT…GHEEEARDED (80 aa)) is disordered. A compositionally biased stretch (polar residues) spans 7–24 (TPHTISGTSPFPRNSSTA). Residues 37–46 (PRHRRSRKRD) are compositionally biased toward basic residues. Residues 69–80 (GHGHEEEARDED) show a composition bias toward basic and acidic residues.

The protein belongs to the NPR1-interactor family. As to quaternary structure, interacts with NPR1/NH1. Interacts with NPR3/NH3.

Its subcellular location is the nucleus. Its function is as follows. Binds to and represses NPR1/NH1-mediated transcriptional activation of LG2 in vitro. This is NRR repressor homolog 3 from Oryza sativa subsp. japonica (Rice).